The primary structure comprises 1109 residues: Protein phosphatase 1 regulatory subunit 3A (1109 aa).

Ser40 and Ser44 each carry phosphoserine; by GSK3. Ser48 carries the post-translational modification Phosphoserine; by PKA and ISPK. Ser51 carries the post-translational modification Phosphoserine. Position 58 is a phosphothreonine (Thr58). Residues 64-67 carry the PP1-binding motif motif; that stretch reads RRVS. At Ser67 the chain carries Phosphoserine; by PKA. In terms of domain architecture, CBM21 spans 124-232; that stretch reads QLQVQKAMLE…NNNGTNYTLV (109 aa). A compositionally biased stretch (basic and acidic residues) spans 236-251; that stretch reads KEPEPEPGKPLEEAPS. 4 disordered regions span residues 236-278, 340-424, 436-455, and 493-517; these read KEPE…NFEN, GKNT…SDGS, DDNA…CSFP, and YFKK…KEKR. Composition is skewed to polar residues over residues 340-352, 360-384, and 396-406; these read GKNT…SNIP, KNQS…SAES, and YSSGNESSHQP. At Ser843 the chain carries Phosphoserine. Disordered stretches follow at residues 945–985 and 1011–1048; these read SATE…RKEK and SREN…ETQD. A compositionally biased stretch (polar residues) spans 951-963; the sequence is YNCSPTRETQGQP. Composition is skewed to basic and acidic residues over residues 966–985 and 1011–1034; these read KPEE…RKEK and SREN…KEFE. Positions 1035-1048 are enriched in polar residues; that stretch reads SSASSSLPVQETQD. A helical transmembrane segment spans residues 1066–1086; that stretch reads FLLFLMFLVTVYHYDLMIGLA.

Interacts with PPP1CC catalytic subunit of PP1, and associates with glycogen. Phosphorylation at Ser-48 by ISPK stimulates the dephosphorylation of glycogen synthase and phosphorylase kinase. Skeletal muscle, diaphragm and cardiac muscle.

The protein resides in the membrane. Seems to act as a glycogen-targeting subunit for PP1. PP1 is essential for cell division, and participates in the regulation of glycogen metabolism, muscle contractility and protein synthesis. Plays an important role in glycogen synthesis but is not essential for insulin activation of glycogen synthase. The sequence is that of Protein phosphatase 1 regulatory subunit 3A (PPP1R3A) from Oryctolagus cuniculus (Rabbit).